Consider the following 122-residue polypeptide: NADH-quinone oxidoreductase subunit A (122 aa).

3 consecutive transmembrane segments (helical) span residues Ile-12–Ile-32, Leu-66–Ile-86, and Ile-91–Ile-111.

It belongs to the complex I subunit 3 family. In terms of assembly, NDH-1 is composed of 14 different subunits. Subunits NuoA, H, J, K, L, M, N constitute the membrane sector of the complex.

It is found in the cell inner membrane. It catalyses the reaction a quinone + NADH + 5 H(+)(in) = a quinol + NAD(+) + 4 H(+)(out). Its function is as follows. NDH-1 shuttles electrons from NADH, via FMN and iron-sulfur (Fe-S) centers, to quinones in the respiratory chain. The immediate electron acceptor for the enzyme in this species is believed to be ubiquinone. Couples the redox reaction to proton translocation (for every two electrons transferred, four hydrogen ions are translocated across the cytoplasmic membrane), and thus conserves the redox energy in a proton gradient. This is NADH-quinone oxidoreductase subunit A from Pelagibacter ubique (strain HTCC1062).